Reading from the N-terminus, the 271-residue chain is Insulin-like growth factor-binding protein 5 (271 aa).

Positions 1–19 (MVLTAVLLLLAACAGSAQG) are cleaved as a signal peptide. An IGFBP N-terminal domain is found at 22 to 102 (SFVHCEPCDE…LHGRGVCLNE (81 aa)). 6 disulfide bridges follow: C26–C52, C29–C54, C37–C55, C44–C58, C66–C79, and C73–C99. Over residues 109-121 (AKIERDSREHEEP) the composition is skewed to basic and acidic residues. The tract at residues 109–129 (AKIERDSREHEEPTTSEMAEE) is disordered. S115 carries the phosphoserine modification. Positions 188-262 (QGPCRRHMEA…MEYVDGDFQC (75 aa)) constitute a Thyroglobulin type-1 domain. Intrachain disulfides connect C191/C218, C229/C240, and C242/C262.

As to quaternary structure, interacts with IGF1; this interaction enhances the growth stimulatory effects of IGF1 on fibroblasts. Interacts with CAV1; this interaction allows trafficking of IGFBP5 from the plasma membrane to the nucleus. Interacts with NCL; this interaction is necessary for IGFBP5 localization to the nucleus.

The protein resides in the secreted. It localises to the cytoplasm. Its subcellular location is the nucleus. Its function is as follows. Multifunctional protein that plays a critical role in regulating the availability of IGFs to their receptors and thereby regulates IGF-mediated cellular processes including proliferation, differentiation, and apoptosis in a cell-type specific manner. Increases the cell proliferation of osteoblasts, intestinal smooth muscle cells and neuroblastoma cells. Enhances adhesion and survival of epithelial cells but decreases adhesion of mesenchymal cells. Once secreted, acts as a major mediator of mTORC1-dependent feedback inhibition of IGF1 signaling. Also plays a role in the induction of extracellular matrix (ECM) production and deposition independently of its nuclear translocation and binding to IGFs. Acts itself as a growth factor that can act independently of IGFs to regulate bone formation. Acts as a ligand for the ROR1 receptor which triggers formation of ROR1/HER2 heterodimer to enhance CREB oncogenic signaling. The chain is Insulin-like growth factor-binding protein 5 (IGFBP5) from Bos taurus (Bovine).